Reading from the N-terminus, the 612-residue chain is Sulfite reductase [NADPH] flavoprotein alpha-component (612 aa).

Residues 64–202 form the Flavodoxin-like domain; the sequence is VTLISASQTG…QAQQWRQQVV (139 aa). Residues 70-75, 117-120, and 153-162 contribute to the FMN site; these read SQTGNA, STQG, and LGDTSYEHFC. The region spanning 247–461 is the FAD-binding FR-type domain; it reads TAPLTAQLSV…IEHNDNFRLP (215 aa). FAD contacts are provided by residues Thr-335, Lys-369, 399 to 402, 417 to 419, Tyr-423, and 432 to 435; these read RLYS, TVG, and GGAS. NADP(+) contacts are provided by residues 532–533, 538–542, and Asp-574; these read SR and KIYVQ. Position 612 (Tyr-612) interacts with FAD.

It belongs to the NADPH-dependent sulphite reductase flavoprotein subunit CysJ family. The protein in the N-terminal section; belongs to the flavodoxin family. This sequence in the C-terminal section; belongs to the flavoprotein pyridine nucleotide cytochrome reductase family. As to quaternary structure, alpha(8)-beta(8). The alpha component is a flavoprotein, the beta component is a hemoprotein. Requires FAD as cofactor. FMN is required as a cofactor.

The catalysed reaction is hydrogen sulfide + 3 NADP(+) + 3 H2O = sulfite + 3 NADPH + 4 H(+). Its pathway is sulfur metabolism; hydrogen sulfide biosynthesis; hydrogen sulfide from sulfite (NADPH route): step 1/1. Component of the sulfite reductase complex that catalyzes the 6-electron reduction of sulfite to sulfide. This is one of several activities required for the biosynthesis of L-cysteine from sulfate. The flavoprotein component catalyzes the electron flow from NADPH -&gt; FAD -&gt; FMN to the hemoprotein component. This is Sulfite reductase [NADPH] flavoprotein alpha-component from Yersinia pestis bv. Antiqua (strain Nepal516).